Consider the following 144-residue polypeptide: Large ribosomal subunit protein uL13 (144 aa).

It belongs to the universal ribosomal protein uL13 family. Part of the 50S ribosomal subunit.

This protein is one of the early assembly proteins of the 50S ribosomal subunit, although it is not seen to bind rRNA by itself. It is important during the early stages of 50S assembly. The protein is Large ribosomal subunit protein uL13 of Clostridium acetobutylicum (strain ATCC 824 / DSM 792 / JCM 1419 / IAM 19013 / LMG 5710 / NBRC 13948 / NRRL B-527 / VKM B-1787 / 2291 / W).